Reading from the N-terminus, the 284-residue chain is MIRIAIPNKGRLHEPTIQMFKEAGLPVLGGSNRKLFAKTNDPEITFLFARAADIPEYVQDGAADVGITGLDLISETESDVEMLLDLKYGGADLVLAVPEESDISSANDLDGMRVATEFPGITARYFKDLGIKIDVVKVSGACEMTPHVGIADAIVDISSSGTTLVMNHLKVIEKVFSSSIYLIANHETAKTEEKIEHIKTALESVMHAKAKRYLMMNAPITVVDDLKEVLPGLAGPTIMKVESKEDIVAVHAVVDADIIFATITKLKAAGAFDILVMPIERMIP.

The protein belongs to the ATP phosphoribosyltransferase family. Long subfamily. The cofactor is Mg(2+).

It localises to the cytoplasm. The enzyme catalyses 1-(5-phospho-beta-D-ribosyl)-ATP + diphosphate = 5-phospho-alpha-D-ribose 1-diphosphate + ATP. The protein operates within amino-acid biosynthesis; L-histidine biosynthesis; L-histidine from 5-phospho-alpha-D-ribose 1-diphosphate: step 1/9. Its activity is regulated as follows. Feedback inhibited by histidine. Its function is as follows. Catalyzes the condensation of ATP and 5-phosphoribose 1-diphosphate to form N'-(5'-phosphoribosyl)-ATP (PR-ATP). Has a crucial role in the pathway because the rate of histidine biosynthesis seems to be controlled primarily by regulation of HisG enzymatic activity. The sequence is that of ATP phosphoribosyltransferase from Methanococcoides burtonii (strain DSM 6242 / NBRC 107633 / OCM 468 / ACE-M).